The sequence spans 567 residues: Geranylgeranyl transferase type-2 subunit alpha (567 aa).

PFTA repeat units follow at residues 44 to 78, 88 to 122, 124 to 158, 159 to 193, 207 to 241, and 363 to 397; these read LDESVLELTSQILGANPDFATLWNCRREVLQQLET, LVKAELGFLESCLRVNPKSYGTWHHRCWLLSRLPE, NWARELELCARFLEADERNFHCWDYRRFVAAQAAV, APAEELAFTDSLITRNFSNYSSWHYRSCLLPQLHP, VLLRELELVQNAFFTDPNDQSAWFYHRWLLGRAEP, and VLQSELESCKELQELEPENKWCLLTIILLMRALDP. Ser-98 bears the Phosphoserine mark. LRR repeat units follow at residues 442–463, 464–486, 487–508, 509–530, and 534–555; these read DVRVLHLAHKDLTVLCHLEQLL, LVTHLDLSHNRLRALPPALAALR, CLEVLQASDNVLENLDGVANLP, RLRELLLCNNRLQQSAALQTLA, and RLVFLNLQGNSLCQEEGIRERL.

Belongs to the protein prenyltransferase subunit alpha family. As to quaternary structure, heterotrimer composed of RABGGTA, RABGGTB and CHM; within this trimer, RABGGTA and RABGGTB form the catalytic component B, while CHM (component A) mediates peptide substrate binding. The Rab GGTase dimer (RGGT) interacts with CHM (component A) prior to Rab protein binding; the association is stabilized by geranylgeranyl pyrophosphate (GGpp). The CHM:RGGT:Rab complex is destabilized by GGpp. Interacts with non-phosphorylated form of RAB8A; phosphorylation of RAB8A at 'Thr-72' disrupts this interaction.

It carries out the reaction geranylgeranyl diphosphate + L-cysteinyl-[protein] = S-geranylgeranyl-L-cysteinyl-[protein] + diphosphate. The enzymatic reaction requires the aid of a Rab escort protein (also called component A), such as CHM. Functionally, catalyzes the transfer of a geranylgeranyl moiety from geranylgeranyl diphosphate to both cysteines of Rab proteins with the C-terminal sequence -XXCC, -XCXC and -CCXX, such as RAB1A, RAB3A, RAB5A and RAB7A. In Mus musculus (Mouse), this protein is Geranylgeranyl transferase type-2 subunit alpha (Rabggta).